The sequence spans 433 residues: Legumain (433 aa).

A signal peptide spans 1–17; that stretch reads MVWKVAVFLSAALVIGA. The N-linked (GlcNAc...) asparagine glycan is linked to Asn91. His148 is a catalytic residue. Asn167 carries an N-linked (GlcNAc...) asparagine glycan. Cys189 functions as the Nucleophile in the catalytic mechanism. Asn263 and Asn272 each carry an N-linked (GlcNAc...) asparagine glycan. A propeptide spanning residues 324 to 433 is cleaved from the precursor; it reads DLEESRQLTE…SMDHVCLGHY (110 aa). Disulfide bonds link Cys378-Cys412 and Cys390-Cys429.

The protein belongs to the peptidase C13 family. In terms of assembly, homodimer before autocatalytic removal of the propeptide. Monomer after autocatalytic processing. May interact with integrins. Post-translationally, activated by autocatalytic processing at pH 4.

Its subcellular location is the lysosome. It catalyses the reaction Hydrolysis of proteins and small molecule substrates at -Asn-|-Xaa- bonds.. Functionally, has a strict specificity for hydrolysis of asparaginyl bonds. Can also cleave aspartyl bonds slowly, especially under acidic conditions. Involved in the processing of proteins for MHC class II antigen presentation in the lysosomal/endosomal system. Also involved in MHC class I antigen presentation in cross-presenting dendritic cells by mediating cleavage and maturation of Perforin-2 (MPEG1), thereby promoting antigen translocation in the cytosol. Required for normal lysosomal protein degradation in renal proximal tubules. Required for normal degradation of internalized EGFR. Plays a role in the regulation of cell proliferation via its role in EGFR degradation. The sequence is that of Legumain (LGMN) from Pongo abelii (Sumatran orangutan).